Consider the following 106-residue polypeptide: ATP-dependent Clp protease adapter protein ClpS (106 aa).

Belongs to the ClpS family. As to quaternary structure, binds to the N-terminal domain of the chaperone ClpA.

Involved in the modulation of the specificity of the ClpAP-mediated ATP-dependent protein degradation. The chain is ATP-dependent Clp protease adapter protein ClpS from Yersinia enterocolitica serotype O:8 / biotype 1B (strain NCTC 13174 / 8081).